The sequence spans 459 residues: Taurine--pyruvate aminotransferase (459 aa).

Position 287 is an N6-(pyridoxal phosphate)lysine (lysine 287).

Belongs to the class-III pyridoxal-phosphate-dependent aminotransferase family. The cofactor is pyridoxal 5'-phosphate.

It is found in the cytoplasm. The enzyme catalyses taurine + pyruvate = sulfoacetaldehyde + L-alanine. The protein operates within organosulfur degradation; taurine degradation via aerobic pathway; acetyl phosphate and sulfite from taurine: step 1/2. Its function is as follows. Catalyzes the degradation of taurine into alanine and sulfoacetaldehyde. This chain is Taurine--pyruvate aminotransferase, found in Rhodobacter capsulatus (strain ATCC BAA-309 / NBRC 16581 / SB1003).